Reading from the N-terminus, the 182-residue chain is NADH-quinone oxidoreductase subunit B 1 (182 aa).

Cysteine 47, cysteine 48, cysteine 113, and cysteine 142 together coordinate [4Fe-4S] cluster.

The protein belongs to the complex I 20 kDa subunit family. NDH-1 is composed of 14 different subunits. Subunits NuoB, C, D, E, F, and G constitute the peripheral sector of the complex. It depends on [4Fe-4S] cluster as a cofactor.

It is found in the cell inner membrane. It catalyses the reaction a quinone + NADH + 5 H(+)(in) = a quinol + NAD(+) + 4 H(+)(out). In terms of biological role, NDH-1 shuttles electrons from NADH, via FMN and iron-sulfur (Fe-S) centers, to quinones in the respiratory chain. Couples the redox reaction to proton translocation (for every two electrons transferred, four hydrogen ions are translocated across the cytoplasmic membrane), and thus conserves the redox energy in a proton gradient. In Anaeromyxobacter dehalogenans (strain 2CP-C), this protein is NADH-quinone oxidoreductase subunit B 1.